The chain runs to 363 residues: Probable methyltransferase-like protein 24 (363 aa).

A signal peptide spans 1-38; the sequence is MGTAKPPGRGCGALPRWLLGAALLLGLRLCMELRHAGS. Residues 37–62 are disordered; that stretch reads GSGPPGRRDLRGPPRTHLLPAPGPLR.

It belongs to the methyltransferase superfamily.

The protein localises to the secreted. Its function is as follows. Probable methyltransferase. In Rattus norvegicus (Rat), this protein is Probable methyltransferase-like protein 24 (Mettl24).